The chain runs to 83 residues: Probable insulin-like peptide alpha-type 2 (83 aa).

A signal peptide spans Met-1–Asp-21. 3 disulfide bridges follow: Cys-32–Cys-66, Cys-44–Cys-79, and Cys-54–Cys-80.

Belongs to the insulin family.

It localises to the secreted. In Caenorhabditis elegans, this protein is Probable insulin-like peptide alpha-type 2 (ins-22).